The primary structure comprises 272 residues: Undecaprenyl-diphosphatase (272 aa).

The next 7 membrane-spanning stretches (helical) occupy residues 2–22 (FDIIKAVIIGIVEGLTEFLPI), 43–63 (FINMFEYVIQFGAILAVILLY), 82–102 (WQLWAKVIIAVLPSVVVGLPL), 110–130 (LHTPLVVATTLIIYGVLFIIL), 185–205 (YVATEFSFFLAIPTMVGVSIL), 224–244 (VLMTGSIVSFLVAIVAIKWLL), and 252–272 (FKPFGWYRIALGAIVLLVMFI).

The protein belongs to the UppP family.

Its subcellular location is the cell membrane. It catalyses the reaction di-trans,octa-cis-undecaprenyl diphosphate + H2O = di-trans,octa-cis-undecaprenyl phosphate + phosphate + H(+). Its function is as follows. Catalyzes the dephosphorylation of undecaprenyl diphosphate (UPP). Confers resistance to bacitracin. The sequence is that of Undecaprenyl-diphosphatase from Lacticaseibacillus paracasei (strain ATCC 334 / BCRC 17002 / CCUG 31169 / CIP 107868 / KCTC 3260 / NRRL B-441) (Lactobacillus paracasei).